A 161-amino-acid chain; its full sequence is Gamma-glutamylaminecyclotransferase A (161 aa).

Y26–L29 serves as a coordination point for substrate. E101 acts as the Proton acceptor in catalysis.

Belongs to the gamma-glutamylcyclotransferase family.

It carries out the reaction epsilon-(gamma-L-glutamyl)-L-lysine = 5-oxo-L-proline + L-lysine. In terms of biological role, may contribute to degradation of proteins cross-linked by transglutaminases by degrading the cross-link between a lysine and a glutamic acid residue. Catalyzes the formation of 5-oxo-L-proline from L-gamma-glutamyl-L-epsilon-lysine. The polypeptide is Gamma-glutamylaminecyclotransferase A (ggact.1) (Danio rerio (Zebrafish)).